Consider the following 385-residue polypeptide: Calcium/calmodulin-dependent protein kinase type 1D (385 aa).

The 257-residue stretch at 23 to 279 (FEFKETLGTG…CEQAARHPWI (257 aa)) folds into the Protein kinase domain. Residues 29 to 37 (LGTGAFSEV) and Lys52 contribute to the ATP site. A Glycyl lysine isopeptide (Lys-Gly) (interchain with G-Cter in SUMO2) cross-link involves residue Lys113. At Ser122 the chain carries Phosphoserine. Residue Asp144 is the Proton acceptor of the active site. The residue at position 180 (Thr180) is a Phosphothreonine; by CaMKK1 and CaMKK2. The interval 279–319 (IAGDTALNKNIHESVSAQIRKNFAKSKWRQAFNATAVVRHM) is autoinhibitory domain. The tract at residues 299–320 (KNFAKSKWRQAFNATAVVRHMR) is calmodulin-binding. The short motif at 318 to 324 (HMRKLHL) is the Nuclear export signal element. The tract at residues 360-385 (SSGVSGVGAERRPRPTTVTAVHSGSK) is disordered. Residues 375–385 (TTVTAVHSGSK) are compositionally biased toward polar residues.

It belongs to the protein kinase superfamily. CAMK Ser/Thr protein kinase family. CaMK subfamily. Widely expressed. Highly and mostly expressed in polymorphonuclear leukocytes (neutrophilic and eosinophilic granulocytes) while little or no expression is observed in monocytes and lymphocytes.

The protein localises to the cytoplasm. It localises to the nucleus. The catalysed reaction is L-seryl-[protein] + ATP = O-phospho-L-seryl-[protein] + ADP + H(+). It catalyses the reaction L-threonyl-[protein] + ATP = O-phospho-L-threonyl-[protein] + ADP + H(+). With respect to regulation, activated by Ca(2+)/calmodulin. Binding of calmodulin results in conformational change that relieves intrasteric autoinhibition and allows phosphorylation of Thr-180 within the activation loop by CaMKK1 or CaMKK2. Phosphorylation of Thr-180 results in several fold increase in total activity. Unlike CaMK4, may be unable to exhibit autonomous activity after Ca(2+)/calmodulin activation. Its function is as follows. Calcium/calmodulin-dependent protein kinase that operates in the calcium-triggered CaMKK-CaMK1 signaling cascade and, upon calcium influx, activates CREB-dependent gene transcription, regulates calcium-mediated granulocyte function and respiratory burst and promotes basal dendritic growth of hippocampal neurons. In neutrophil cells, required for cytokine-induced proliferative responses and activation of the respiratory burst. Activates the transcription factor CREB1 in hippocampal neuron nuclei. May play a role in apoptosis of erythroleukemia cells. In vitro, phosphorylates transcription factor CREM isoform Beta. The protein is Calcium/calmodulin-dependent protein kinase type 1D (CAMK1D) of Homo sapiens (Human).